A 549-amino-acid chain; its full sequence is MKMFCYQCQEALKNTGCTTIGVCGKTADVANLQDLLIFTLKGISFLNLKAREVGVNKEKTDRFLIEGLFSTITNVNFDRNFFLRKIKEAVALRDEIKEDLRNKGVRVDEYKNIDAISWTYGTDADIEAISQEVGVLSTEDEDIRSLRELITYGVKGMAAYAYHAYQLGYKDDNIFKFMEKALAKVLDDSLTVDDYVALAMETGKYGVDTMALLDKANTSTYGHPEITKVNIGVRNNPGILVSGHDLKDLEQLLEQTAGTGVDVYTHGEMLPAHYYPAFKKYPHFVGNYGNAWWQQDKEFELFNGPILMTTNCLIPPKDSYKDRVYTTGVVGFEGVKYIPEGPDGKKDFSEIIEHAKRCKPPVEIERGEIIGGFAHNQVLQLADKIVEAVKTGAIKRFFVMAGCDGRMKSRTYYTEFAKALPKDTVILTAGCAKYRYNKLNLGDIDGIPRVLDAGQCNDSYSLAVIAMKLKEIFGLNDINELPISYNIAWYEQKAVIVLLALLYLGVKNIHLGPTLPAFLSPNVTKVLVEKFGIGGITNVEDDLKMFLGA.

Residues C5, C8, C17, and C23 each contribute to the [4Fe-4S] cluster site. Hybrid [4Fe-2O-2S] cluster is bound by residues H244, E268, C312, C403, C431, C456, E491, and K493. At C403 the chain carries Cysteine persulfide.

The protein belongs to the HCP family. Requires [4Fe-4S] cluster as cofactor. It depends on hybrid [4Fe-2O-2S] cluster as a cofactor.

The protein localises to the cytoplasm. The catalysed reaction is A + NH4(+) + H2O = hydroxylamine + AH2 + H(+). In terms of biological role, catalyzes the reduction of hydroxylamine to form NH(3) and H(2)O. In Caldanaerobacter subterraneus subsp. tengcongensis (strain DSM 15242 / JCM 11007 / NBRC 100824 / MB4) (Thermoanaerobacter tengcongensis), this protein is Hydroxylamine reductase.